A 166-amino-acid chain; its full sequence is Desiccation-related protein At2g46140 (166 aa).

It belongs to the LEA type 2 family.

This is Desiccation-related protein At2g46140 from Arabidopsis thaliana (Mouse-ear cress).